Reading from the N-terminus, the 201-residue chain is Probable GTP-binding protein EngB (201 aa).

Positions 22-195 (SLPEIAFCGR…MEQLEMILKY (174 aa)) constitute an EngB-type G domain. GTP-binding positions include 30–37 (GRSNVGKS), 57–61 (GKTRT), 75–78 (DLPG), 142–145 (TKLD), and 174–176 (YSS). Mg(2+) is bound by residues Ser-37 and Thr-59.

The protein belongs to the TRAFAC class TrmE-Era-EngA-EngB-Septin-like GTPase superfamily. EngB GTPase family. Mg(2+) is required as a cofactor.

In terms of biological role, necessary for normal cell division and for the maintenance of normal septation. The polypeptide is Probable GTP-binding protein EngB (Finegoldia magna (strain ATCC 29328 / DSM 20472 / WAL 2508) (Peptostreptococcus magnus)).